The chain runs to 219 residues: Asperlin biosynthesis cluster protein I (219 aa).

The interval 97-124 is disordered; it reads TGSSDNSPTATGIGAAGLTGDRPSSSGA. Over residues 105–116 the composition is skewed to low complexity; it reads TATGIGAAGLTG.

The protein operates within polyketide biosynthesis. Part of the gene cluster that mediates the biosynthesis of asperlin, a polyketide showing anti-inflammatory, antitumor and antibiotic activities. The first step of the asperlin biosynthesis is the production of the intermediate 2,4,6-octatrienoic acid by the highly redusing polyketide synthase alnA with cleavage of the PKS product by the esterase alnB. 2,4,6-octatrienoic acid is further converted to asperlin via several steps involving the remaining enzymes from the cluster. The polypeptide is Asperlin biosynthesis cluster protein I (Emericella nidulans (strain FGSC A4 / ATCC 38163 / CBS 112.46 / NRRL 194 / M139) (Aspergillus nidulans)).